A 583-amino-acid chain; its full sequence is 2-succinyl-5-enolpyruvyl-6-hydroxy-3-cyclohexene-1-carboxylate synthase (583 aa).

This sequence belongs to the TPP enzyme family. MenD subfamily. In terms of assembly, homodimer. Requires Mg(2+) as cofactor. Mn(2+) serves as cofactor. Thiamine diphosphate is required as a cofactor.

The catalysed reaction is isochorismate + 2-oxoglutarate + H(+) = 5-enolpyruvoyl-6-hydroxy-2-succinyl-cyclohex-3-ene-1-carboxylate + CO2. The protein operates within quinol/quinone metabolism; 1,4-dihydroxy-2-naphthoate biosynthesis; 1,4-dihydroxy-2-naphthoate from chorismate: step 2/7. Its pathway is cofactor biosynthesis; phylloquinone biosynthesis. Catalyzes the thiamine diphosphate-dependent decarboxylation of 2-oxoglutarate and the subsequent addition of the resulting succinic semialdehyde-thiamine pyrophosphate anion to isochorismate to yield 2-succinyl-5-enolpyruvyl-6-hydroxy-3-cyclohexene-1-carboxylate (SEPHCHC). The polypeptide is 2-succinyl-5-enolpyruvyl-6-hydroxy-3-cyclohexene-1-carboxylate synthase (Trichormus variabilis (strain ATCC 29413 / PCC 7937) (Anabaena variabilis)).